The sequence spans 232 residues: Fibrillarin-like rRNA/tRNA 2'-O-methyltransferase (232 aa).

S-adenosyl-L-methionine-binding positions include 87–88 (TT), 105–106 (EF), 130–131 (DA), and 150–153 (DVAQ).

Belongs to the methyltransferase superfamily. Fibrillarin family. In terms of assembly, interacts with nop5. Component of box C/D small ribonucleoprotein (sRNP) particles that contain rpl7ae, FlpA and nop5, plus a guide RNA.

Involved in pre-rRNA and tRNA processing. Utilizes the methyl donor S-adenosyl-L-methionine to catalyze the site-specific 2'-hydroxyl methylation of ribose moieties in rRNA and tRNA. Site specificity is provided by a guide RNA that base pairs with the substrate. Methylation occurs at a characteristic distance from the sequence involved in base pairing with the guide RNA. The protein is Fibrillarin-like rRNA/tRNA 2'-O-methyltransferase of Methanococcus maripaludis (strain C7 / ATCC BAA-1331).